The primary structure comprises 236 residues: 1-(5-phosphoribosyl)-5-[(5-phosphoribosylamino)methylideneamino] imidazole-4-carboxamide isomerase (236 aa).

Aspartate 8 (proton acceptor) is an active-site residue. Residue aspartate 127 is the Proton donor of the active site.

It belongs to the HisA/HisF family.

The protein resides in the cytoplasm. It catalyses the reaction 1-(5-phospho-beta-D-ribosyl)-5-[(5-phospho-beta-D-ribosylamino)methylideneamino]imidazole-4-carboxamide = 5-[(5-phospho-1-deoxy-D-ribulos-1-ylimino)methylamino]-1-(5-phospho-beta-D-ribosyl)imidazole-4-carboxamide. Its pathway is amino-acid biosynthesis; L-histidine biosynthesis; L-histidine from 5-phospho-alpha-D-ribose 1-diphosphate: step 4/9. The protein is 1-(5-phosphoribosyl)-5-[(5-phosphoribosylamino)methylideneamino] imidazole-4-carboxamide isomerase of Campylobacter hominis (strain ATCC BAA-381 / DSM 21671 / CCUG 45161 / LMG 19568 / NCTC 13146 / CH001A).